A 106-amino-acid chain; its full sequence is Phosphoribosyl-ATP pyrophosphatase (106 aa).

This sequence belongs to the PRA-PH family.

The protein resides in the cytoplasm. The catalysed reaction is 1-(5-phospho-beta-D-ribosyl)-ATP + H2O = 1-(5-phospho-beta-D-ribosyl)-5'-AMP + diphosphate + H(+). Its pathway is amino-acid biosynthesis; L-histidine biosynthesis; L-histidine from 5-phospho-alpha-D-ribose 1-diphosphate: step 2/9. The chain is Phosphoribosyl-ATP pyrophosphatase from Lactiplantibacillus plantarum (strain ATCC BAA-793 / NCIMB 8826 / WCFS1) (Lactobacillus plantarum).